The chain runs to 516 residues: Golgin-84 (516 aa).

Topologically, residues 1–492 (MSSWITGLAD…TFLRRYPMMR (492 aa)) are cytoplasmic. Positions 28–80 (QTENATGSADPMRRSMTSSTQSLSTSLKSTLSPVRRSGANSSSSVKSDGGVSV) are disordered. Positions 42–80 (SMTSSTQSLSTSLKSTLSPVRRSGANSSSSVKSDGGVSV) are enriched in low complexity. Phosphoserine occurs at positions 64 and 74. Residues 108-423 (TNELAAFKIA…KAQTQLQQNM (316 aa)) are a coiled coil. The chain crosses the membrane as a helical; Anchor for type IV membrane protein span at residues 493–513 (VSVIVYVALLHLWVMFVLLST). Residues 514 to 516 (TPN) lie on the Lumenal side of the membrane.

It localises to the golgi apparatus membrane. In terms of biological role, may be involved in maintaining Golgi structure and in intra-Golgi transport. The polypeptide is Golgin-84 (Golgin84) (Drosophila melanogaster (Fruit fly)).